A 219-amino-acid polypeptide reads, in one-letter code: Probable nicotinate-nucleotide adenylyltransferase (219 aa).

It belongs to the NadD family.

The enzyme catalyses nicotinate beta-D-ribonucleotide + ATP + H(+) = deamido-NAD(+) + diphosphate. It functions in the pathway cofactor biosynthesis; NAD(+) biosynthesis; deamido-NAD(+) from nicotinate D-ribonucleotide: step 1/1. Functionally, catalyzes the reversible adenylation of nicotinate mononucleotide (NaMN) to nicotinic acid adenine dinucleotide (NaAD). The sequence is that of Probable nicotinate-nucleotide adenylyltransferase from Enterococcus faecalis (strain ATCC 700802 / V583).